The primary structure comprises 688 residues: Glycine--tRNA ligase beta subunit (688 aa).

Belongs to the class-II aminoacyl-tRNA synthetase family. Tetramer of two alpha and two beta subunits.

The protein localises to the cytoplasm. The catalysed reaction is tRNA(Gly) + glycine + ATP = glycyl-tRNA(Gly) + AMP + diphosphate. This Histophilus somni (strain 2336) (Haemophilus somnus) protein is Glycine--tRNA ligase beta subunit.